The sequence spans 179 residues: Segregation and condensation protein B (179 aa).

It belongs to the ScpB family. As to quaternary structure, homodimer. Homodimerization may be required to stabilize the binding of ScpA to the Smc head domains. Component of a cohesin-like complex composed of ScpA, ScpB and the Smc homodimer, in which ScpA and ScpB bind to the head domain of Smc. The presence of the three proteins is required for the association of the complex with DNA.

The protein resides in the cytoplasm. In terms of biological role, participates in chromosomal partition during cell division. May act via the formation of a condensin-like complex containing Smc and ScpA that pull DNA away from mid-cell into both cell halves. This is Segregation and condensation protein B from Clostridioides difficile (strain 630) (Peptoclostridium difficile).